The chain runs to 485 residues: Glycogen synthase (485 aa).

Lysine 18 lines the ADP-alpha-D-glucose pocket.

The protein belongs to the glycosyltransferase 1 family. Bacterial/plant glycogen synthase subfamily.

The enzyme catalyses [(1-&gt;4)-alpha-D-glucosyl](n) + ADP-alpha-D-glucose = [(1-&gt;4)-alpha-D-glucosyl](n+1) + ADP + H(+). Its pathway is glycan biosynthesis; glycogen biosynthesis. Synthesizes alpha-1,4-glucan chains using ADP-glucose. The protein is Glycogen synthase of Dechloromonas aromatica (strain RCB).